The chain runs to 181 residues: Large ribosomal subunit protein uL6 (181 aa).

The protein belongs to the universal ribosomal protein uL6 family. As to quaternary structure, part of the 50S ribosomal subunit.

Functionally, this protein binds to the 23S rRNA, and is important in its secondary structure. It is located near the subunit interface in the base of the L7/L12 stalk, and near the tRNA binding site of the peptidyltransferase center. The protein is Large ribosomal subunit protein uL6 of Coprothermobacter proteolyticus (strain ATCC 35245 / DSM 5265 / OCM 4 / BT).